The primary structure comprises 264 residues: 3'-5' ssDNA/RNA exonuclease TatD (264 aa).

A divalent metal cation contacts are provided by glutamate 92, histidine 128, and histidine 153.

This sequence belongs to the metallo-dependent hydrolases superfamily. TatD-type hydrolase family. TatD subfamily. As to quaternary structure, monomer. Requires Mg(2+) as cofactor.

Its subcellular location is the cytoplasm. Its function is as follows. 3'-5' exonuclease that prefers single-stranded DNA and RNA. May play a role in the H(2)O(2)-induced DNA damage repair. The polypeptide is 3'-5' ssDNA/RNA exonuclease TatD (Dickeya dadantii (strain 3937) (Erwinia chrysanthemi (strain 3937))).